Reading from the N-terminus, the 53-residue chain is LSSGEKDLVVIGSGPGGYVAAIKAAQLGMLTVCIEKYPTFGGTCLNVGCIPSK.

FAD contacts are provided by residues 35-44 (EKYPTFGGTC) and Lys53. A disulfide bridge links Cys44 with Cys49.

It belongs to the class-I pyridine nucleotide-disulfide oxidoreductase family. As to quaternary structure, homodimer. The cofactor is FAD.

Its subcellular location is the mitochondrion. The catalysed reaction is N(6)-[(R)-dihydrolipoyl]-L-lysyl-[protein] + NAD(+) = N(6)-[(R)-lipoyl]-L-lysyl-[protein] + NADH + H(+). Its activity is regulated as follows. Lipoamide reduction and the NADH -&gt; NAD reaction are both completely inhibited by copper and cadmium ions. Functionally, lipoamide dehydrogenase is a component of the glycine cleavage system as well as of the alpha-ketoacid dehydrogenase complexes. This enzyme has lipoamide dehydrogenase activity and NADH -&gt; NAD transhydrogenation activity. Also displays some NADH-ferricyanide reductase and NADPH -&gt; NAD transydrogenation activities. The protein is Dihydrolipoyl dehydrogenase of Hymenolepis diminuta (Rat tapeworm).